The chain runs to 201 residues: 3-isopropylmalate dehydratase small subunit (201 aa).

It belongs to the LeuD family. LeuD type 1 subfamily. In terms of assembly, heterodimer of LeuC and LeuD.

It carries out the reaction (2R,3S)-3-isopropylmalate = (2S)-2-isopropylmalate. The protein operates within amino-acid biosynthesis; L-leucine biosynthesis; L-leucine from 3-methyl-2-oxobutanoate: step 2/4. Catalyzes the isomerization between 2-isopropylmalate and 3-isopropylmalate, via the formation of 2-isopropylmaleate. The polypeptide is 3-isopropylmalate dehydratase small subunit (Klebsiella pneumoniae (strain 342)).